Here is a 207-residue protein sequence, read N- to C-terminus: Ras-related protein Rab7 (207 aa).

Residues 15–22 (GDSSVGKT), 34–40 (SNQYKAT), 63–67 (DTAGQ), 125–128 (NKVD), and 156–157 (AK) contribute to the GTP site. The Effector region signature appears at 37 to 45 (YKATIGADF). S-geranylgeranyl cysteine attachment occurs at residues Cys205 and Cys207.

The protein belongs to the small GTPase superfamily. Rab family. In terms of tissue distribution, expressed in eye (at protein level).

The protein localises to the early endosome membrane. Its subcellular location is the late endosome membrane. The protein resides in the lysosome membrane. It localises to the cytoplasmic vesicle. It is found in the autophagosome membrane. The protein localises to the autolysosome membrane. Its subcellular location is the presynapse. The protein resides in the perikaryon. The enzyme catalyses GTP + H2O = GDP + phosphate + H(+). In terms of biological role, small GTPase which cycles between active GTP-bound and inactive GDP-bound states. In its active state, binds to a variety of effector proteins playing a key role in the regulation of endo-lysosomal trafficking. Involved in microtubule minus and plus end-directed endosomal migration and positioning, and endosome-lysosome transport through different protein-protein interaction cascades. Governs early-to-late endosomal to lysosomal maturation. Controls endocytic cargo sorting towards the late endosome facilitating its eventual endolysosomal-mediated degradation. Together with Rab2 involved in promoting fusion of autophagosomes and endosomes with lysosomes probably through recruitment of the HOPS tethering complex. Involved in biosynthetic transport to lysosomes. Involved in establishing morphogen concentration gradients, for example of the TGF-beta homolog dpp/decapentaplegic, during pattern formation and organogenesis. Together with the Mon1-Ccz1 complex, required for autolysosome formation in fat cells and autophagic degradation during starvation-induced basal and developmental autophagy. Together with Mon1, regulates levels of postsynaptic glutamate receptor GluRIIA in the neuromuscular junction (NMJ) presynapse. Required for autophagocytosis-dependent remodeling of myofibrils and transverse-tubules (T-tubules) during metamorphosis. Involved in intracellular trafficking of the carbohydrate transporter Tret1 in glial cells of the blood brain barrier, influencing its subcellular localization and protein levels. The polypeptide is Ras-related protein Rab7 (Drosophila melanogaster (Fruit fly)).